The sequence spans 254 residues: Receptor expression-enhancing protein 2 (254 aa).

The next 2 helical transmembrane spans lie at 1–21 (MVSW…YPAY) and 35–55 (YVKW…ETLT). Residue serine 152 is modified to Phosphoserine. A disordered region spans residues 194-254 (LSLRSSTSQP…KKSSGGGDSA (61 aa)). The segment covering 205-219 (PRTETSEDDLGDKAP) has biased composition (basic and acidic residues).

It belongs to the DP1 family. Interacts with odorant receptor proteins.

Its subcellular location is the membrane. In terms of biological role, required for endoplasmic reticulum (ER) network formation, shaping and remodeling. May enhance the cell surface expression of odorant receptors. This Mus musculus (Mouse) protein is Receptor expression-enhancing protein 2 (Reep2).